A 262-amino-acid polypeptide reads, in one-letter code: Phosphatidylserine decarboxylase proenzyme (262 aa).

Residues Asp-86, His-142, and Ser-226 each act as charge relay system; for autoendoproteolytic cleavage activity in the active site. Ser-226 (schiff-base intermediate with substrate; via pyruvic acid; for decarboxylase activity) is an active-site residue. At Ser-226 the chain carries Pyruvic acid (Ser); by autocatalysis.

Belongs to the phosphatidylserine decarboxylase family. PSD-B subfamily. Prokaryotic type I sub-subfamily. As to quaternary structure, heterodimer of a large membrane-associated beta subunit and a small pyruvoyl-containing alpha subunit. Pyruvate is required as a cofactor. Is synthesized initially as an inactive proenzyme. Formation of the active enzyme involves a self-maturation process in which the active site pyruvoyl group is generated from an internal serine residue via an autocatalytic post-translational modification. Two non-identical subunits are generated from the proenzyme in this reaction, and the pyruvate is formed at the N-terminus of the alpha chain, which is derived from the carboxyl end of the proenzyme. The autoendoproteolytic cleavage occurs by a canonical serine protease mechanism, in which the side chain hydroxyl group of the serine supplies its oxygen atom to form the C-terminus of the beta chain, while the remainder of the serine residue undergoes an oxidative deamination to produce ammonia and the pyruvoyl prosthetic group on the alpha chain. During this reaction, the Ser that is part of the protease active site of the proenzyme becomes the pyruvoyl prosthetic group, which constitutes an essential element of the active site of the mature decarboxylase.

The protein resides in the cell membrane. It carries out the reaction a 1,2-diacyl-sn-glycero-3-phospho-L-serine + H(+) = a 1,2-diacyl-sn-glycero-3-phosphoethanolamine + CO2. The protein operates within phospholipid metabolism; phosphatidylethanolamine biosynthesis; phosphatidylethanolamine from CDP-diacylglycerol: step 2/2. Its function is as follows. Catalyzes the formation of phosphatidylethanolamine (PtdEtn) from phosphatidylserine (PtdSer). In Bacillus cereus (strain ZK / E33L), this protein is Phosphatidylserine decarboxylase proenzyme.